The following is a 395-amino-acid chain: Gastric triacylglycerol lipase (395 aa).

An N-terminal signal peptide occupies residues Met1 to Gly18. Asn33 is a glycosylation site (N-linked (GlcNAc...) asparagine). Residues Leu81–Trp376 form the AB hydrolase-1 domain. Ser171 serves as the catalytic Nucleophile. Cys245 and Cys254 form a disulfide bridge. N-linked (GlcNAc...) asparagine glycosylation is present at Asn270. Residues Asp342 and His371 each act as charge relay system in the active site.

It belongs to the AB hydrolase superfamily. Lipase family.

The protein localises to the secreted. The catalysed reaction is a triacylglycerol + H2O = a diacylglycerol + a fatty acid + H(+). It carries out the reaction 1,2,3-tri-(9Z-octadecenoyl)-glycerol + H2O = 1,2-di-(9Z-octadecenoyl)-sn-glycerol + (9Z)-octadecenoate + H(+). It catalyses the reaction 1,2,3-trioctanoylglycerol + H2O = 1,2-dioctanoyl-sn-glycerol + octanoate + H(+). In terms of biological role, catalyzes the hydrolysis of triacylglycerols to yield free fatty acids, diacylglycerol, monoacylglycerol, and glycerol. Shows a preferential hydrolysis at the sn-3 position of triacylglycerol. The chain is Gastric triacylglycerol lipase (Lipf) from Mus musculus (Mouse).